The following is a 336-amino-acid chain: Fructose-1,6-bisphosphatase class 1 (336 aa).

Glu90, Asp112, Leu114, and Asp115 together coordinate Mg(2+). Residues 115 to 118 (DGSS), Asn211, and Lys277 contribute to the substrate site. Glu283 is a Mg(2+) binding site.

The protein belongs to the FBPase class 1 family. Homotetramer. Mg(2+) serves as cofactor.

It localises to the cytoplasm. The enzyme catalyses beta-D-fructose 1,6-bisphosphate + H2O = beta-D-fructose 6-phosphate + phosphate. It participates in carbohydrate biosynthesis; gluconeogenesis. The polypeptide is Fructose-1,6-bisphosphatase class 1 (Pseudomonas paraeruginosa (strain DSM 24068 / PA7) (Pseudomonas aeruginosa (strain PA7))).